Reading from the N-terminus, the 127-residue chain is Small ribosomal subunit protein uS12m (127 aa).

This sequence belongs to the universal ribosomal protein uS12 family.

The protein resides in the mitochondrion. Protein S12 is involved in the translation initiation step. The polypeptide is Small ribosomal subunit protein uS12m (RPS12) (Chondrus crispus (Carrageen Irish moss)).